The primary structure comprises 468 residues: H(+)/Cl(-) exchange transporter ClcA (468 aa).

The Cytoplasmic portion of the chain corresponds to 1–30; sequence MSTRETFKISLLAKMPKDVINQFLSKDKTP. Residues 31–67 form a helical membrane-spanning segment; it reads FSVLFLSLLVGILAGLVGTYFEQAVHLVSETRTDWLK. At 68-74 the chain is on the periplasmic side; that stretch reads SEIGSFL. A helical membrane pass occupies residues 75–98; it reads PLWLAAFLISAFLAFIGYFLVHRF. Residues 104–108 carry the Selectivity filter part_1 motif; sequence GSGIP. Residue Ser105 coordinates chloride. An intramembrane region (helical) is located at residues 107 to 114; the sequence is IPEIEGAM. Residues 115-121 lie on the Cytoplasmic side of the membrane; sequence DGMRPVR. Transmembrane regions (helical) follow at residues 122-139 and 146-164; these read WWRVLPVKFFGGMGALGS and EGPTVQMGGAVGRMISDIF. A Selectivity filter part_2 motif is present at residues 144-148; that stretch reads GREGP. Topologically, residues 165-174 are cytoplasmic; it reads RVKNEDTRHS. 2 intramembrane regions (helical) span residues 175 to 187 and 191 to 199; these read LLAAGAAGGLAAA and PLAGIMFVI. At 200–212 the chain is on the cytoplasmic side; the sequence is EEMRPQFRYTLIS. A helical transmembrane segment spans residues 213–230; that stretch reads VRAVIISAVAANIVFRVI. Residues 231-250 lie on the Periplasmic side of the membrane; that stretch reads NGQDAVITMPQYDAPELSTL. Residues 251–279 traverse the membrane as a helical segment; the sequence is GLFLLLGALFGVFGVLFNYLITLAQDLFV. Topologically, residues 280–285 are cytoplasmic; that stretch reads KFHRND. Residues 286–307 form a helical membrane-spanning segment; the sequence is RKRYLLTGSMIGGCFGLLLLYV. At 308 to 327 the chain is on the periplasmic side; that stretch reads PELTGGGISLIPTITNGGYG. The next 2 membrane-spanning stretches (helical) occupy residues 328-347 and 353-374; these read AGILLLLFVGRIFTTLLCFG and GIFAPMLALGTLFGYAFGLIAK. The Selectivity filter part_3 signature appears at 353–357; the sequence is GIFAP. The chloride site is built by Ile354 and Phe355. Residues 375-384 lie on the Periplasmic side of the membrane; that stretch reads MWFPELNIEP. An intramembrane region (helical) is located at residues 385–399; it reads GMFAIAGMGALFAAT. Residues 400-402 constitute an intramembrane region (note=Loop between two helices); the sequence is VRA. Residues 403–414 constitute an intramembrane region (helical); the sequence is PITGILLVIEMT. Residues 415 to 419 constitute an intramembrane region (note=Loop between two helices); sequence NNYHL. Residues 420-436 traverse the membrane as a helical segment; the sequence is ILPLIITSLGAVIFAQL. The Cytoplasmic segment spans residues 437 to 468; the sequence is LGGQPIYSQLLHRTLKNQKLQQQDLPPQSPNS. Tyr443 provides a ligand contact to chloride.

The protein belongs to the chloride channel (TC 2.A.49) family. ClcA subfamily. As to quaternary structure, homodimer.

It is found in the cell inner membrane. It catalyses the reaction 2 chloride(in) + H(+)(out) = 2 chloride(out) + H(+)(in). Its function is as follows. Proton-coupled chloride transporter. Functions as antiport system and exchanges two chloride ions for 1 proton. Probably acts as an electrical shunt for an outwardly-directed proton pump that is linked to amino acid decarboxylation, as part of the extreme acid resistance (XAR) response. In Vibrio cholerae serotype O1 (strain ATCC 39315 / El Tor Inaba N16961), this protein is H(+)/Cl(-) exchange transporter ClcA.